A 161-amino-acid polypeptide reads, in one-letter code: Probable calcium-binding protein CML16 (161 aa).

EF-hand domains follow at residues 8–43, 44–79, 83–118, and 119–154; these read DQIKQLKDIFARFDMDKDGSLTQLELAALLRSLGIK, PRGDQISLLLNQIDRNGNGSVEFDELVVAILPDINE, INQEQLMEVFRSFDRDGNGSITAAELAGSMAKMGHP, and LTYRELTEMMTEADSNGDGVISFNEFSHIMAKSAAD. Asp21, Asp23, Asp25, Ser27, Glu32, Asp57, Asn59, Asn61, Ser63, Glu68, Asp96, Asp98, Asn100, Ser102, Glu107, Asp132, Asn134, Asp136, and Glu143 together coordinate Ca(2+).

Its function is as follows. Potential calcium sensor. The chain is Probable calcium-binding protein CML16 (CML16) from Arabidopsis thaliana (Mouse-ear cress).